Here is a 530-residue protein sequence, read N- to C-terminus: ATP synthase subunit alpha (530 aa).

172–179 (GDRQTGKT) contributes to the ATP binding site.

This sequence belongs to the ATPase alpha/beta chains family. F-type ATPases have 2 components, CF(1) - the catalytic core - and CF(0) - the membrane proton channel. CF(1) has five subunits: alpha(3), beta(3), gamma(1), delta(1), epsilon(1). CF(0) has three main subunits: a(1), b(2) and c(9-12). The alpha and beta chains form an alternating ring which encloses part of the gamma chain. CF(1) is attached to CF(0) by a central stalk formed by the gamma and epsilon chains, while a peripheral stalk is formed by the delta and b chains.

It localises to the cell inner membrane. It catalyses the reaction ATP + H2O + 4 H(+)(in) = ADP + phosphate + 5 H(+)(out). In terms of biological role, produces ATP from ADP in the presence of a proton gradient across the membrane. The alpha chain is a regulatory subunit. The polypeptide is ATP synthase subunit alpha (Phocaeicola vulgatus (strain ATCC 8482 / DSM 1447 / JCM 5826 / CCUG 4940 / NBRC 14291 / NCTC 11154) (Bacteroides vulgatus)).